The sequence spans 150 residues: SsrA-binding protein (150 aa).

This sequence belongs to the SmpB family.

It is found in the cytoplasm. Functionally, required for rescue of stalled ribosomes mediated by trans-translation. Binds to transfer-messenger RNA (tmRNA), required for stable association of tmRNA with ribosomes. tmRNA and SmpB together mimic tRNA shape, replacing the anticodon stem-loop with SmpB. tmRNA is encoded by the ssrA gene; the 2 termini fold to resemble tRNA(Ala) and it encodes a 'tag peptide', a short internal open reading frame. During trans-translation Ala-aminoacylated tmRNA acts like a tRNA, entering the A-site of stalled ribosomes, displacing the stalled mRNA. The ribosome then switches to translate the ORF on the tmRNA; the nascent peptide is terminated with the 'tag peptide' encoded by the tmRNA and targeted for degradation. The ribosome is freed to recommence translation, which seems to be the essential function of trans-translation. This chain is SsrA-binding protein, found in Coprothermobacter proteolyticus (strain ATCC 35245 / DSM 5265 / OCM 4 / BT).